The following is a 246-amino-acid chain: Probable transcriptional regulatory protein ORF2U (246 aa).

It belongs to the TACO1 family.

It is found in the cytoplasm. The sequence is that of Probable transcriptional regulatory protein ORF2U from Hathewaya histolytica (Clostridium histolyticum).